The chain runs to 788 residues: Ribonucleoside-diphosphate reductase subunit alpha (788 aa).

Residues 2–92 (ITVVKRNGRI…LYDLYHKVSG (91 aa)) form the ATP-cone domain. Residues Lys-6, 12-18 (EPLDITK), and Thr-52 each bind ATP. Thr-200 provides a ligand contact to GDP. An intrachain disulfide couples Cys-216 to Cys-497. DTTP contacts are provided by residues 223 to 225 (DNI) and Arg-253. Asn-424 contacts GDP. Catalysis depends on Asn-424, which acts as the Proton acceptor. The active-site Cysteine radical intermediate is Cys-426. GDP-binding positions include Glu-428 and 661 to 663 (SSI). The active-site Proton acceptor is the Glu-428.

Belongs to the ribonucleoside diphosphate reductase large chain family. As to quaternary structure, tetramer of two alpha and two beta subunits.

It carries out the reaction a 2'-deoxyribonucleoside 5'-diphosphate + [thioredoxin]-disulfide + H2O = a ribonucleoside 5'-diphosphate + [thioredoxin]-dithiol. Its activity is regulated as follows. Under complex allosteric control mediated by deoxynucleoside triphosphates and ATP binding to separate specificity and activation sites on the alpha subunit. The type of nucleotide bound at the specificity site determines substrate preference. It seems probable that ATP makes the enzyme reduce CDP and UDP, dGTP favors ADP reduction and dTTP favors GDP reduction. Stimulated by ATP and inhibited by dATP binding to the activity site. In terms of biological role, provides the precursors necessary for DNA synthesis. Catalyzes the biosynthesis of deoxyribonucleotides from the corresponding ribonucleotides. This is Ribonucleoside-diphosphate reductase subunit alpha (nrdA) from Helicobacter pylori (strain J99 / ATCC 700824) (Campylobacter pylori J99).